The primary structure comprises 558 residues: Formate--tetrahydrofolate ligase (558 aa).

67–74 (TPAGEGKT) contributes to the ATP binding site.

This sequence belongs to the formate--tetrahydrofolate ligase family.

It carries out the reaction (6S)-5,6,7,8-tetrahydrofolate + formate + ATP = (6R)-10-formyltetrahydrofolate + ADP + phosphate. It functions in the pathway one-carbon metabolism; tetrahydrofolate interconversion. The protein is Formate--tetrahydrofolate ligase of Ruegeria sp. (strain TM1040) (Silicibacter sp.).